The primary structure comprises 336 residues: UPF0284 protein PYRAB00380 (336 aa).

Belongs to the UPF0284 family.

The protein is UPF0284 protein PYRAB00380 of Pyrococcus abyssi (strain GE5 / Orsay).